Here is a 224-residue protein sequence, read N- to C-terminus: UPF0758 protein CJA_3522 (224 aa).

In terms of domain architecture, MPN spans 102–224; sequence LLSSPHLVRD…LVSLAERGWL (123 aa). Residues His-173, His-175, and Asp-186 each contribute to the Zn(2+) site. The short motif at 173-186 is the JAMM motif element; the sequence is HNHPSGLAEPSQAD.

It belongs to the UPF0758 family.

The polypeptide is UPF0758 protein CJA_3522 (Cellvibrio japonicus (strain Ueda107) (Pseudomonas fluorescens subsp. cellulosa)).